The primary structure comprises 308 residues: Thiohydrolase (308 aa).

The protein belongs to the polyketide transferase af380 family.

Its pathway is mycotoxin biosynthesis. Its function is as follows. Thiohydrolase; part of the gene cluster that mediates the biosynthesis of brefeldin A (BFA), a protein transport inhibitor that shows antiviral, antifungal, and antitumor properties. The proposed biosynthesis of BFA involves formation of an acyclic polyketide chain that is differentially tailored throughout the backbone. The highly reducing polyketide synthase Bref-PKS is proposed to synthesize the precisely reduced octaketide precursor, which could then be directly offloaded by the thiohydrolase enzyme Bref-TH followed by a cytochrome P450 monooxygenase-mediated formation of the cyclopentane ring and macrocyclization to afford 7-deoxy BFA. Alternatively, the first ring annulation can also occur on the ACP-tethered intermediate before the thiohydrolase release and lactonization. The C7-hydroxylation by another cytochrome P450 monooxygenase is believed to be the final step in the process to obtain the final structure of BFA. In addition to the HRPKS Bref-PKS and the thiohydrolase Bref-TH, the brefeldin A biosynthesis cluster contains 4 cytochrome p450 monooxygenases (called orf3 to orf6), as well a the probable cluster-specific transcription regulator orf8. This chain is Thiohydrolase, found in Eupenicillium brefeldianum (Penicillium brefeldianum).